We begin with the raw amino-acid sequence, 112 residues long: Phosphoribosyl-AMP cyclohydrolase (112 aa).

Asp-76 lines the Mg(2+) pocket. Cys-77 lines the Zn(2+) pocket. Mg(2+) is bound by residues Asp-78 and Asp-80. Zn(2+) is bound by residues Cys-93 and Cys-100.

Belongs to the PRA-CH family. Homodimer. Mg(2+) serves as cofactor. It depends on Zn(2+) as a cofactor.

It is found in the cytoplasm. It carries out the reaction 1-(5-phospho-beta-D-ribosyl)-5'-AMP + H2O = 1-(5-phospho-beta-D-ribosyl)-5-[(5-phospho-beta-D-ribosylamino)methylideneamino]imidazole-4-carboxamide. It functions in the pathway amino-acid biosynthesis; L-histidine biosynthesis; L-histidine from 5-phospho-alpha-D-ribose 1-diphosphate: step 3/9. Catalyzes the hydrolysis of the adenine ring of phosphoribosyl-AMP. The polypeptide is Phosphoribosyl-AMP cyclohydrolase (Streptococcus thermophilus (strain ATCC BAA-491 / LMD-9)).